Here is a 505-residue protein sequence, read N- to C-terminus: Cobyric acid synthase (505 aa).

The GATase cobBQ-type domain maps to 251–444 (DIDVAVIKLP…IHGIFDNSEF (194 aa)). Catalysis depends on C332, which acts as the Nucleophile. H436 is an active-site residue.

The protein belongs to the CobB/CobQ family. CobQ subfamily.

It participates in cofactor biosynthesis; adenosylcobalamin biosynthesis. Catalyzes amidations at positions B, D, E, and G on adenosylcobyrinic A,C-diamide. NH(2) groups are provided by glutamine, and one molecule of ATP is hydrogenolyzed for each amidation. This is Cobyric acid synthase from Clostridium novyi (strain NT).